A 107-amino-acid chain; its full sequence is Transcription initiation factor IIA subunit 2-2 (107 aa).

It belongs to the TFIIA subunit 2 family. In terms of assembly, TFIIA is a heterodimer of the large unprocessed subunit 1 and a small subunit gamma. It was originally believed to be a heterotrimer of an alpha (p30), a beta (p20) and a gamma (p14) subunit.

The protein localises to the nucleus. In terms of biological role, TFIIA is a component of the transcription machinery of RNA polymerase II and plays an important role in transcriptional activation. TFIIA in a complex with TBP mediates transcriptional activity. The sequence is that of Transcription initiation factor IIA subunit 2-2 (TfIIA-S-2) from Drosophila melanogaster (Fruit fly).